Reading from the N-terminus, the 367-residue chain is UDP-N-acetylglucosamine--N-acetylmuramyl-(pentapeptide) pyrophosphoryl-undecaprenol N-acetylglucosamine transferase (367 aa).

UDP-N-acetyl-alpha-D-glucosamine contacts are provided by residues 15–17 (TGG), Asn126, Arg169, Ser197, and Gln298.

The protein belongs to the glycosyltransferase 28 family. MurG subfamily.

It localises to the cell inner membrane. It carries out the reaction di-trans,octa-cis-undecaprenyl diphospho-N-acetyl-alpha-D-muramoyl-L-alanyl-D-glutamyl-meso-2,6-diaminopimeloyl-D-alanyl-D-alanine + UDP-N-acetyl-alpha-D-glucosamine = di-trans,octa-cis-undecaprenyl diphospho-[N-acetyl-alpha-D-glucosaminyl-(1-&gt;4)]-N-acetyl-alpha-D-muramoyl-L-alanyl-D-glutamyl-meso-2,6-diaminopimeloyl-D-alanyl-D-alanine + UDP + H(+). It participates in cell wall biogenesis; peptidoglycan biosynthesis. Cell wall formation. Catalyzes the transfer of a GlcNAc subunit on undecaprenyl-pyrophosphoryl-MurNAc-pentapeptide (lipid intermediate I) to form undecaprenyl-pyrophosphoryl-MurNAc-(pentapeptide)GlcNAc (lipid intermediate II). This is UDP-N-acetylglucosamine--N-acetylmuramyl-(pentapeptide) pyrophosphoryl-undecaprenol N-acetylglucosamine transferase from Bradyrhizobium sp. (strain BTAi1 / ATCC BAA-1182).